A 149-amino-acid chain; its full sequence is UPF0178 protein Sama_3557 (149 aa).

It belongs to the UPF0178 family.

This chain is UPF0178 protein Sama_3557, found in Shewanella amazonensis (strain ATCC BAA-1098 / SB2B).